The primary structure comprises 519 residues: MIOREX complex component 12 (519 aa).

Residues 1-35 (MLRSLHSAATLSNKRFYSLISHSNRKNIIKKLLRH) constitute a mitochondrion transit peptide.

Associates with the mitochondrial ribosome.

It localises to the mitochondrion. In terms of biological role, component of MIOREX complexes, large expressome-like assemblies of ribosomes with factors involved in all the steps of post-transcriptional gene expression. The chain is MIOREX complex component 12 from Saccharomyces cerevisiae (strain ATCC 204508 / S288c) (Baker's yeast).